Consider the following 484-residue polypeptide: MSDRIRVRYAPSPTGYLHIGNARTALFNYLYAKHYNGDFVIRIEDTDKKRNLEDGETSQFDNLKWLGLDWDESVDKDNGYGPYRQSERQHIYQPLIDQLLAEDKAYKCYMTEEELEVEREAQIARGEMPRYGGQHAHLTEEQRQQFEAEGRQPSIRFRVPQNQTYSFDDMVKGNISFDSNGIGDWVIVKKDGIPTYNFAVAIDDHYMEISDVIRGDDHISNTPKQIMIYEAFGWEPPRFGHMSLIVNEERKKLSKRDGQILQFIEQYRDLGYLPEALFNFIALLGWSPEGEEEIFSKEEFIKIFDEKRLSKSPAFFDKQKLAWVNNQYMKQKDTETVFQLALPHLIKANLIPEVPSEEDLSWGRKLIALYQKEMSYAGEIVPLSEMFFKEMPALGEEEQQVINGEQVPELMTHLFSKLEALEPFEVAEIKKTIKEVQKETGIKGKQLFMPIRVAVTGQMHGPELPNTIEVLGKEKVLNRLKQYK.

The 'HIGH' region signature appears at 11-21 (PSPTGYLHIGN). The 'KMSKS' region signature appears at 252–256 (KLSKR). Residue lysine 255 coordinates ATP.

It belongs to the class-I aminoacyl-tRNA synthetase family. Glutamate--tRNA ligase type 1 subfamily. As to quaternary structure, monomer.

It is found in the cytoplasm. It catalyses the reaction tRNA(Glu) + L-glutamate + ATP = L-glutamyl-tRNA(Glu) + AMP + diphosphate. Its function is as follows. Catalyzes the attachment of glutamate to tRNA(Glu) in a two-step reaction: glutamate is first activated by ATP to form Glu-AMP and then transferred to the acceptor end of tRNA(Glu). The polypeptide is Glutamate--tRNA ligase (Staphylococcus aureus (strain bovine RF122 / ET3-1)).